A 551-amino-acid chain; its full sequence is MSNIQVLASSQLSDKIIARPTTKFHPSIWGDRFLHYNISEQDLVCKQEKVEELIQVVKKEILSSNHDQLKLIDNLQRLGLSYHFESEIEKLLEQLSITHHQNHHDLHDASLWFRLLRQHGFNVSSSIFEKFKDEEGNFKESLITDVPGLLSLYEASHLSYVGESILDEALAFTTTHLKAIVANSKDHPLSHQISIVLHRPLRKTIERLHARFYISIYEKDASHNKLLLELAKLDFNLLQCFHKKELSEITRWWKEHEFAKKFPFARDRMVELYFWILGVYYEPKYSRARKLLTKVIALTSITDDIYDAYGTIDELQLLTKAIQRWDINCMDKLKQEYLKTYYKVMLDSYEEFEKELKKEELYKLEYAKEEMKRIIGGYFEEARWLNEGYFPSFDEHLRVSYVSSGNVLLIATSFVGMHDVVTHETLDWLSKDPKIVSASTLLSRFMDDIGSRKFEQKRNHIPSTVDCYMKQYGVSEEEAIKELNKRVDTHWKEINEDFIRPAVVPFPILVRVLNFTKIVDLLYKEGDDQYTNVGKVLKESIAALLIDSIPL.

Residues Arg266, Asp303, Asp307, Arg444, and Asp447 each contribute to the (2E,6E)-farnesyl diphosphate site. Mg(2+) contacts are provided by Asp303 and Asp307. The DDXXD motif signature appears at 303–307 (DDIYD). Mg(2+) contacts are provided by Asp447, Ser451, and Glu455.

Belongs to the terpene synthase family. Tpsb subfamily. Mg(2+) serves as cofactor. Requires Mn(2+) as cofactor. Highly expressed in glandular trichomes.

The catalysed reaction is (2E,6E)-farnesyl diphosphate + H2O = (2E,6E)-hedycaryol + diphosphate. The protein operates within secondary metabolite biosynthesis; terpenoid biosynthesis. Its function is as follows. Involved in sesquiterpene olefins biosynthesis, constituants of cannabinoids and terpenoids-rich resins. Catalyzes primarily the conversion of (2E)-farnesyl diphosphate to hedycaryol, which is spontaneously converted to elemol as a thermal degradation product. This is Hedycaryol synthase TPS20CT from Cannabis sativa (Hemp).